The chain runs to 264 residues: E3 ubiquitin-protein ligase MARCHF8 (264 aa).

Residues 15–47 (LGHSVSRSSNISKAGSPTSVSAPSRFPRTSVTP) form a disordered region. Residues 16-47 (GHSVSRSSNISKAGSPTSVSAPSRFPRTSVTP) show a composition bias toward polar residues. The segment at 45 to 106 (VTPSSQDICR…ELCKFEFIME (62 aa)) adopts an RING-CH-type zinc-finger fold. Zn(2+) contacts are provided by Cys-53, Cys-56, Cys-70, Cys-72, His-80, Cys-83, Cys-96, and Cys-99. 2 helical membrane passes run 130–150 (CSVTFHVIAITCVVWSLYVLI) and 170–190 (FWTKLVVVAIGFTGGLLFMYV).

It localises to the cytoplasmic vesicle membrane. The protein resides in the lysosome membrane. It is found in the early endosome membrane. It catalyses the reaction S-ubiquitinyl-[E2 ubiquitin-conjugating enzyme]-L-cysteine + [acceptor protein]-L-lysine = [E2 ubiquitin-conjugating enzyme]-L-cysteine + N(6)-ubiquitinyl-[acceptor protein]-L-lysine.. The protein operates within protein modification; protein ubiquitination. Functionally, E3 ubiquitin-protein ligase that mediates ubiquitination of cd86 and MHC class II proteins, such as hla-dr alpha and beta, and promotes their subsequent endocytosis and sorting to lysosomes via multivesicular bodies. In Xenopus laevis (African clawed frog), this protein is E3 ubiquitin-protein ligase MARCHF8 (marchf8).